Consider the following 364-residue polypeptide: Photoreceptor outer segment membrane glycoprotein 2 (364 aa).

Residues 1–24 lie on the Cytoplasmic side of the membrane; it reads MTVLKVKFTKTKRDKLAQILWILN. Residues 25–43 form a helical membrane-spanning segment; that stretch reads WVSVVSGIILFSLGLFLKI. The Lumenal segment spans residues 44–61; sequence EIKKRNEVMAKGDINSVP. Residues 62 to 80 form a helical membrane-spanning segment; sequence NMLISVGVIACVVNFLGGK. Residues 81 to 99 are Cytoplasmic-facing; the sequence is ICYDCSDANKFSRWKLIML. Residues 100–123 traverse the membrane as a helical segment; the sequence is PYIICTFCFTFCILLGALMCYTMR. Residues 124–264 are Lumenal-facing; that stretch reads NELEESLYLG…LEYYTAIMRS (141 aa). Asn229 carries N-linked (GlcNAc...) asparagine glycosylation. Residues 265 to 290 traverse the membrane as a helical segment; that stretch reads IGIAALLIWLFELSVLIGVRYLQTAM. Topologically, residues 291–364 are cytoplasmic; it reads KNVLLQGDLQ…VTAKSIPAAS (74 aa).

Belongs to the PRPH2/ROM1 family.

Its subcellular location is the membrane. This Gallus gallus (Chicken) protein is Photoreceptor outer segment membrane glycoprotein 2.